A 219-amino-acid polypeptide reads, in one-letter code: Protein ERP1 (219 aa).

The N-terminal stretch at 1–22 (MLLTSLLQVFACCLVLPAQVTA) is a signal peptide. The Lumenal portion of the chain corresponds to 23 to 186 (FYYYTSGAER…RDASEAVNSR (164 aa)). One can recognise a GOLD domain in the interval 32-131 (RKCFHKELSK…KTKIDVEFQV (100 aa)). Residues 187–207 (AMWWIVIQLIVLAVTCGWQMK) form a helical membrane-spanning segment. At 208-219 (HLGKFFVKQKIL) the chain is on the cytoplasmic side.

Belongs to the EMP24/GP25L family. In terms of assembly, associates with EMP24, ERV25 and ERP2.

It is found in the endoplasmic reticulum membrane. Its function is as follows. Involved in vesicular protein trafficking. This is Protein ERP1 (ERP1) from Saccharomyces cerevisiae (strain ATCC 204508 / S288c) (Baker's yeast).